We begin with the raw amino-acid sequence, 600 residues long: MTMTLHTKASGMALLHQIQGNELEPLNRPQLKMPMERALGEVYVDNSKPAVFNYPEGAAYEFNAAAAAAAAGASAPVYGQSSITYGPGSEAAAFGANSLGAFPQLNSVSPSPLMLLHPPPHVSPFLHPHGHQVPYYLENEPSAYAVRDTGPPAFYRSNSDNRRQNGRERLSSSSEKGNMIMESAKETRYCAVCNDYASGYHYGVWSCEGCKAFFKRSIQGHNDYMCPATNQCTIDKNRRKSCQACRLRKCYEVGMMKGGIRKDRRGGRMLKHKRQRDDLEGRNEMGTSGDMRAANLWPSPLVIKHTKKNSPALSLTADQMVSALLDAEPPLIYSEYDPSRPFSEASMMGLLTNLADRELVHMINWAKRVPGFGDLNLHDQVHLLECAWLEILMIGLVWRSMEHPGKLLFAPNLLLDRNQGKCVEGMVEIFDMLLATSSRFRMMNLQGEEFVCLKSIILLNSGVYTFLSSTLKSLEEKDHIHRVLDKINDTLIHLMAKAGLTLQQQHRRLAQLLLILSHIRHMSNKGMEHLYNMKCKNVVPLYDLLLEMLDAHRLHAPASRMGVPPEEPSQSQLTTTSSTSAHSLQTYYIPPEAEGFPNTI.

Residues methionine 1 to tyrosine 189 are modulating (transactivation AF-1); mediates interaction with MACROD1. Serine 10 carries O-linked (GlcNAc) serine glycosylation. The interval methionine 35–serine 47 is required for interaction with NCOA1. The interval methionine 35–methionine 179 is interaction with DDX5; self-association. Phosphoserine; by CDK2 is present on residues serine 109 and serine 111. Serine 123 is modified (phosphoserine). The disordered stretch occupies residues aspartate 148–glycine 177. Positions serine 159–leucine 170 are enriched in basic and acidic residues. The residue at position 172 (serine 172) is a Phosphoserine; by CK2. NR C4-type zinc fingers lie at residues cysteine 190 to cysteine 210 and cysteine 226 to cysteine 250. The segment at residues cysteine 190–methionine 255 is a DNA-binding region (nuclear receptor). The tract at residues cysteine 190–leucine 315 is mediates interaction with DNTTIP2. Residues methionine 256–leucine 315 form a hinge region. Arginine 265 is modified (asymmetric dimethylarginine; by PRMT1). The segment at glycine 267–isoleucine 600 is interaction with AKAP13. A self-association region spans residues methionine 269–isoleucine 600. The 237-residue stretch at threonine 316–histidine 552 folds into the NR LBD domain. The transactivation AF-2 stretch occupies residues threonine 316 to isoleucine 600. 17beta-estradiol contacts are provided by glutamate 358 and arginine 399. Cysteine 452 is lipidated: S-palmitoyl cysteine. A 17beta-estradiol-binding site is contributed by histidine 529. Tyrosine 542 carries the post-translational modification Phosphotyrosine; by Tyr-kinases. Positions alanine 558–alanine 581 are disordered. Residues serine 569–alanine 581 show a composition bias toward low complexity. Threonine 576 is a glycosylation site (O-linked (GlcNAc) threonine).

It belongs to the nuclear hormone receptor family. NR3 subfamily. In terms of assembly, interacts with BCAS3. Binds DNA as a homodimer. Can form a heterodimer with ESR2. Interacts with coactivator NCOA5. Interacts with PELP1, the interaction is enhanced by 17-beta-estradiol; the interaction increases ESR1 transcriptional activity. Interacts with NCOA7; the interaction is ligand-inducible. Interacts with AKAP13, CUEDC2, HEXIM1, KDM5A, MAP1S, SMARD1, and UBE1C. Interacts with MUC1; the interaction is stimulated by 7 beta-estradiol (E2) and enhances ESR1-mediated transcription. Interacts with DNTTIP2, and UIMC1. Interacts with KMT2D/MLL2. Interacts with ATAD2; the interaction is enhanced by estradiol. Interacts with KIF18A and LDB1. Interacts with RLIM (via its C-terminus). Interacts with MACROD1. Interacts with SH2D4A and PLCG. Interacts with SH2D4A; the interaction blocks binding to PLCG and inhibits estrogen-induced cell proliferation. Interacts with DYNLL1. Interacts with CCDC62; the interaction requires estradiol and appears to enhance the transcription of target genes. Interacts with NR2C1; the interaction prevents homodimerization of ESR1 and suppresses its transcriptional activity and cell growth. Interacts with DNAAF4. Interacts with PRMT2. Interacts with RBFOX2. Interacts with EP300; the interaction is estrogen-dependent and enhanced by CITED1. Interacts with CITED1; the interaction is estrogen-dependent. Interacts with FAM120B, FOXL2, PHB2 and SLC30A9. Interacts with coactivators NCOA3 and NCOA6. Interacts with STK3/MST2 only in the presence of SAV1 and vice-versa. Binds to CSNK1D. Interacts with NCOA2; NCOA2 can interact with ESR1 AF-1 and AF-2 domains simultaneously and mediate their transcriptional synergy. Interacts with DDX5. Interacts with NCOA1; the interaction seems to require a self-association of N-terminal and C-terminal regions. Interacts with ZNF366, DDX17, NFKB1, RELA, SP1 and SP3. Interacts with NRIP1. Interacts with GPER1; the interaction occurs in an estrogen-dependent manner. Interacts with TRIP4 (ufmylated); estrogen dependent. Interacts with LMTK3; the interaction phosphorylates ESR1 (in vitro) and protects it against proteasomal degradation. Interacts with CCAR2 (via N-terminus) in a ligand-independent manner. Interacts with ZFHX3. Interacts with SFR1 in a ligand-dependent and -independent manner. Interacts with DCAF13, LATS1 and DCAF1; regulates ESR1 ubiquitination and ubiquitin-mediated proteasomal degradation. Interacts (via DNA-binding domain) with POU4F2 (C-terminus); this interaction increases the estrogen receptor ESR1 transcriptional activity in a DNA- and ligand 17-beta-estradiol-independent manner. Interacts with ESRRB isoform 1. Interacts with UBE3A and WBP2. Interacts with GTF2B. Interacts with RBM39. In the absence of hormonal ligand, interacts with TACC1. Interacts with PI3KR1 or PI3KR2 and PTK2/FAK1. Interacts with SRC. Interacts with BAG1; the interaction is promoted in the absence of estradiol (17-beta-estradiol/E2). Interacts with and ubiquitinated by STUB1; the interaction is promoted in the absence of estradiol (17-beta-estradiol/E2). Interacts with NEDD8. In terms of processing, phosphorylated by cyclin A/CDK2 and CK1. Phosphorylation probably enhances transcriptional activity. Dephosphorylation at Ser-123 by PPP5C inhibits its transactivation activity. Phosphorylated by LMTK3 (in vitro). Post-translationally, ubiquitinated; regulated by LATS1 via DCAF1 it leads to ESR1 proteasomal degradation. Deubiquitinated by OTUB1. Ubiquitinated by STUB1/CHIP; in the CA1 hippocampal region following loss of endogenous circulating estradiol (17-beta-estradiol/E2). Ubiquitinated by UBR5, leading to its degradation: UBR5 specifically recognizes and binds ligand-bound ESR1 when it is not associated with coactivators (NCOAs). In presence of NCOAs, the UBR5-degron is not accessible, preventing its ubiquitination and degradation. Palmitoylated at Cys-452 by ZDHHC7 and ZDHHC21. This modification is required for plasma membrane targeting and for rapid intracellular signaling via ERK and AKT kinases and cAMP generation, but not for signaling mediated by the nuclear hormone receptor. In terms of processing, dimethylated by PRMT1 at Arg-265. The methylation may favor cytoplasmic localization. Demethylated by JMJD6 at Arg-265. As to expression, expressed in the CA1 region of the hippocampus, expression decreases with age (at protein level). Expressed in the uterus (at protein level).

It is found in the nucleus. It localises to the cytoplasm. The protein resides in the golgi apparatus. Its subcellular location is the cell membrane. Its function is as follows. Nuclear hormone receptor. The steroid hormones and their receptors are involved in the regulation of eukaryotic gene expression and affect cellular proliferation and differentiation in target tissues. Ligand-dependent nuclear transactivation involves either direct homodimer binding to a palindromic estrogen response element (ERE) sequence or association with other DNA-binding transcription factors, such as AP-1/c-Jun, c-Fos, ATF-2, Sp1 and Sp3, to mediate ERE-independent signaling. Ligand binding induces a conformational change allowing subsequent or combinatorial association with multiprotein coactivator complexes through LXXLL motifs of their respective components. Mutual transrepression occurs between the estrogen receptor (ER) and NF-kappa-B in a cell-type specific manner. Decreases NF-kappa-B DNA-binding activity and inhibits NF-kappa-B-mediated transcription from the IL6 promoter and displace RELA/p65 and associated coregulators from the promoter. Recruited to the NF-kappa-B response element of the CCL2 and IL8 promoters and can displace CREBBP. Present with NF-kappa-B components RELA/p65 and NFKB1/p50 on ERE sequences. Can also act synergistically with NF-kappa-B to activate transcription involving respective recruitment adjacent response elements; the function involves CREBBP. Can activate the transcriptional activity of TFF1. Also mediates membrane-initiated estrogen signaling involving various kinase cascades. Essential for MTA1-mediated transcriptional regulation of BRCA1 and BCAS3. Maintains neuronal survival in response to ischemic reperfusion injury when in the presence of circulating estradiol (17-beta-estradiol/E2). This chain is Estrogen receptor (Esr1), found in Rattus norvegicus (Rat).